A 198-amino-acid polypeptide reads, in one-letter code: Probable GTP-binding protein EngB (198 aa).

The EngB-type G domain maps to 22–195; the sequence is GHPEIAFLGR…WSWLEQTAGL (174 aa). Residues 30-37, 57-61, 75-78, 142-145, and 174-176 each bind GTP; these read GRSNVGKS, GKTQT, DVPG, TKID, and FSA. Positions 37 and 59 each coordinate Mg(2+).

This sequence belongs to the TRAFAC class TrmE-Era-EngA-EngB-Septin-like GTPase superfamily. EngB GTPase family. It depends on Mg(2+) as a cofactor.

Functionally, necessary for normal cell division and for the maintenance of normal septation. This Lacticaseibacillus paracasei (strain ATCC 334 / BCRC 17002 / CCUG 31169 / CIP 107868 / KCTC 3260 / NRRL B-441) (Lactobacillus paracasei) protein is Probable GTP-binding protein EngB.